We begin with the raw amino-acid sequence, 431 residues long: uncharacterized protein (431 aa).

The next 11 helical transmembrane spans lie at 33 to 53, 63 to 83, 111 to 131, 143 to 163, 197 to 217, 241 to 261, 273 to 293, 318 to 338, 358 to 378, 383 to 403, and 407 to 427; these read VARV…VIYL, FSVF…ANGL, VSGM…PLWS, VALL…LGML, LVGF…MLMT, AHSI…PVLL, GVVI…LTAM, LIGG…PWIM, AAAV…AAAL, SLGW…PLSL, and TVVA…VALA.

This sequence to M.tuberculosis Rv1510 and Rv3630.

It localises to the cell membrane. This is an uncharacterized protein from Mycobacterium bovis (strain ATCC BAA-935 / AF2122/97).